The primary structure comprises 144 residues: Large ribosomal subunit protein uL11 (144 aa).

Belongs to the universal ribosomal protein uL11 family. In terms of assembly, part of the ribosomal stalk of the 50S ribosomal subunit. Interacts with L10 and the large rRNA to form the base of the stalk. L10 forms an elongated spine to which L12 dimers bind in a sequential fashion forming a multimeric L10(L12)X complex. One or more lysine residues are methylated.

Functionally, forms part of the ribosomal stalk which helps the ribosome interact with GTP-bound translation factors. This Streptomyces coelicolor (strain ATCC BAA-471 / A3(2) / M145) protein is Large ribosomal subunit protein uL11.